A 163-amino-acid polypeptide reads, in one-letter code: 2,3-dimethylmalate dehydratase small subunit (163 aa).

The protein belongs to the LeuD family. LeuD type 2 subfamily. As to quaternary structure, heterodimer of a large and a small subunit.

The enzyme catalyses (2R,3S)-2,3-dimethylmalate = dimethylmaleate + H2O. Its pathway is cofactor degradation; nicotinate degradation; propanoate and pyruvate from 6-hydroxynicotinate: step 7/8. The chain is 2,3-dimethylmalate dehydratase small subunit from Eubacterium barkeri (Clostridium barkeri).